Reading from the N-terminus, the 813-residue chain is Leucine--tRNA ligase (813 aa).

Positions 40-51 (SYPSGSKLHAGH) match the 'HIGH' region motif. Residues 572–576 (KMSKS) carry the 'KMSKS' region motif. K575 contacts ATP.

Belongs to the class-I aminoacyl-tRNA synthetase family.

The protein localises to the cytoplasm. It carries out the reaction tRNA(Leu) + L-leucine + ATP = L-leucyl-tRNA(Leu) + AMP + diphosphate. This chain is Leucine--tRNA ligase, found in Clostridium botulinum (strain ATCC 19397 / Type A).